Consider the following 565-residue polypeptide: Granule-bound starch synthase 1b, chloroplastic/amyloplastic (565 aa).

A chloroplast-targeting transit peptide spans 1-34 (VFLSMRNKTQLAKRRATNYETHRNSSRTSSPIVC). Lys52 contributes to the ADP-alpha-D-glucose binding site.

It belongs to the glycosyltransferase 1 family. Bacterial/plant glycogen synthase subfamily.

It localises to the plastid. It is found in the chloroplast. The protein resides in the amyloplast. It catalyses the reaction an NDP-alpha-D-glucose + [(1-&gt;4)-alpha-D-glucosyl](n) = [(1-&gt;4)-alpha-D-glucosyl](n+1) + a ribonucleoside 5'-diphosphate + H(+). It participates in glycan biosynthesis; starch biosynthesis. Functionally, involved in the synthesis of amylose in endosperm. The polypeptide is Granule-bound starch synthase 1b, chloroplastic/amyloplastic (Hordeum vulgare (Barley)).